We begin with the raw amino-acid sequence, 503 residues long: Secreted RxLR effector protein RXLR-C08 (503 aa).

An N-terminal signal peptide occupies residues 1–22 (MRLCGVASAFLSTLILIAHIDA). Residues asparagine 27, asparagine 35, and asparagine 45 are each glycosylated (N-linked (GlcNAc...) asparagine). A dEER motif is present at residues 57–60 (DEER). N-linked (GlcNAc...) asparagine glycans are attached at residues asparagine 108, asparagine 197, and asparagine 374.

The protein belongs to the RxLR effector family.

Its subcellular location is the secreted. The protein localises to the host Golgi apparatus. Secreted effector that suppresses pattern-triggered immunity (PTI) in plant host. The polypeptide is Secreted RxLR effector protein RXLR-C08 (Plasmopara halstedii (Downy mildew of sunflower)).